Here is a 613-residue protein sequence, read N- to C-terminus: tRNA 5-methylaminomethyl-2-thiouridine biosynthesis bifunctional protein MnmC (613 aa).

The tRNA (mnm(5)s(2)U34)-methyltransferase stretch occupies residues 1–225 (MKKAKLIFKD…KREMIKAYLE (225 aa)). Positions 252-613 (IGAGISSAVL…FLIRKLKKGL (362 aa)) are FAD-dependent cmnm(5)s(2)U34 oxidoreductase.

In the N-terminal section; belongs to the methyltransferase superfamily. tRNA (mnm(5)s(2)U34)-methyltransferase family. This sequence in the C-terminal section; belongs to the DAO family. FAD serves as cofactor.

Its subcellular location is the cytoplasm. It catalyses the reaction 5-aminomethyl-2-thiouridine(34) in tRNA + S-adenosyl-L-methionine = 5-methylaminomethyl-2-thiouridine(34) in tRNA + S-adenosyl-L-homocysteine + H(+). Functionally, catalyzes the last two steps in the biosynthesis of 5-methylaminomethyl-2-thiouridine (mnm(5)s(2)U) at the wobble position (U34) in tRNA. Catalyzes the FAD-dependent demodification of cmnm(5)s(2)U34 to nm(5)s(2)U34, followed by the transfer of a methyl group from S-adenosyl-L-methionine to nm(5)s(2)U34, to form mnm(5)s(2)U34. In Campylobacter jejuni subsp. jejuni serotype O:2 (strain ATCC 700819 / NCTC 11168), this protein is tRNA 5-methylaminomethyl-2-thiouridine biosynthesis bifunctional protein MnmC.